Reading from the N-terminus, the 635-residue chain is Phosphatidylserine decarboxylase proenzyme 2 (635 aa).

Residues 20–146 form the C2 domain; the sequence is KLQKFRIHRR…VVQEPESTCK (127 aa). EF-hand domains follow at residues 174–209 and 210–245; these read TERR…FGNL and VAAN…QQEQ. Ca(2+)-binding residues include D187, N189, D191, Q193, E198, D223, N225, D227, and E234. Active-site charge relay system; for autoendoproteolytic cleavage activity residues include D443, H499, and S587. Residue S587 is the Schiff-base intermediate with substrate; via pyruvic acid; for decarboxylase activity of the active site. At S587 the chain carries Pyruvic acid (Ser); by autocatalysis.

It belongs to the phosphatidylserine decarboxylase family. PSD-B subfamily. Eukaryotic type II sub-subfamily. In terms of assembly, heterodimer of a large membrane-associated beta subunit and a small pyruvoyl-containing alpha subunit. Requires pyruvate as cofactor. Is synthesized initially as an inactive proenzyme. Formation of the active enzyme involves a self-maturation process in which the active site pyruvoyl group is generated from an internal serine residue via an autocatalytic post-translational modification. Two non-identical subunits are generated from the proenzyme in this reaction, and the pyruvate is formed at the N-terminus of the alpha chain, which is derived from the carboxyl end of the proenzyme. The autoendoproteolytic cleavage occurs by a canonical serine protease mechanism, in which the side chain hydroxyl group of the serine supplies its oxygen atom to form the C-terminus of the beta chain, while the remainder of the serine residue undergoes an oxidative deamination to produce ammonia and the pyruvoyl prosthetic group on the alpha chain. During this reaction, the Ser that is part of the protease active site of the proenzyme becomes the pyruvoyl prosthetic group, which constitutes an essential element of the active site of the mature decarboxylase. In terms of tissue distribution, highly expressed in flowers and at lower levels in leaves.

It is found in the vacuole membrane. It carries out the reaction a 1,2-diacyl-sn-glycero-3-phospho-L-serine + H(+) = a 1,2-diacyl-sn-glycero-3-phosphoethanolamine + CO2. The protein operates within phospholipid metabolism; phosphatidylethanolamine biosynthesis; phosphatidylethanolamine from CDP-diacylglycerol: step 2/2. Catalyzes the formation of phosphatidylethanolamine (PtdEtn) from phosphatidylserine (PtdSer). Plays a central role in phospholipid metabolism and in the interorganelle trafficking of phosphatidylserine. Contributes only to a minor proportion of PtdEtn production. This is Phosphatidylserine decarboxylase proenzyme 2 (PSD2) from Arabidopsis thaliana (Mouse-ear cress).